We begin with the raw amino-acid sequence, 476 residues long: Aspartyl/glutamyl-tRNA(Asn/Gln) amidotransferase subunit B (476 aa).

It belongs to the GatB/GatE family. GatB subfamily. In terms of assembly, heterotrimer of A, B and C subunits.

It carries out the reaction L-glutamyl-tRNA(Gln) + L-glutamine + ATP + H2O = L-glutaminyl-tRNA(Gln) + L-glutamate + ADP + phosphate + H(+). The catalysed reaction is L-aspartyl-tRNA(Asn) + L-glutamine + ATP + H2O = L-asparaginyl-tRNA(Asn) + L-glutamate + ADP + phosphate + 2 H(+). Allows the formation of correctly charged Asn-tRNA(Asn) or Gln-tRNA(Gln) through the transamidation of misacylated Asp-tRNA(Asn) or Glu-tRNA(Gln) in organisms which lack either or both of asparaginyl-tRNA or glutaminyl-tRNA synthetases. The reaction takes place in the presence of glutamine and ATP through an activated phospho-Asp-tRNA(Asn) or phospho-Glu-tRNA(Gln). The chain is Aspartyl/glutamyl-tRNA(Asn/Gln) amidotransferase subunit B from Neisseria meningitidis serogroup C / serotype 2a (strain ATCC 700532 / DSM 15464 / FAM18).